Here is a 237-residue protein sequence, read N- to C-terminus: Cysteine-rich venom protein DIS2 (237 aa).

The N-terminal stretch at 1 to 18 (MFVFILLSLAAVLQQSFG) is a signal peptide. One can recognise an SCP domain in the interval 37-165 (VDKHNAFRRS…SYNYFYVCQY (129 aa)). Cystine bridges form between Cys74–Cys152, Cys91–Cys166, Cys147–Cys163, Cys185–Cys192, Cys188–Cys197, Cys201–Cys234, and Cys219–Cys232. The ShKT domain maps to 201-234 (CSREDVFMNCKSLVAQSNCQDDYIRKNCPATCFC).

The protein belongs to the CRISP family. In terms of tissue distribution, expressed by the venom gland.

The protein resides in the secreted. In terms of biological role, weakly blocks contraction of smooth muscle elicited by high potassium-induced depolarization, but does not block caffeine-stimulated contraction. May target voltage-gated calcium channels on smooth muscle. The chain is Cysteine-rich venom protein DIS2 from Dispholidus typus (Boomslang).